Here is a 228-residue protein sequence, read N- to C-terminus: Glucose-induced degradation protein 8 homolog (228 aa).

A LisH domain is found at 25 to 57; it reads QRADMNRLIMNYLVTEGFKEAAEKFRMESGIEP. The CTLH domain occupies 63 to 120; the sequence is TLDERIKIREMILKGQIQEAIALINSLHPELLDTNRYLYFHLQQQHLIELIRQRETEA. The interaction with CTNNB1 stretch occupies residues 116-212; it reads RETEAALEFA…QNELDQKKVK (97 aa).

It belongs to the GID8 family. Homodimer; may also form higher oligomers. Identified in the CTLH complex that contains GID4, RANBP9 and/or RANBP10, MKLN1, MAEA, RMND5A (or alternatively its paralog RMND5B), GID8, ARMC8, WDR26 and YPEL5. Within this complex, MAEA, RMND5A (or alternatively its paralog RMND5B), GID8, WDR26, and RANBP9 and/or RANBP10 form the catalytic core, while GID4, MKLN1, ARMC8 and YPEL5 have ancillary roles. Interacts with RANBP9. Part of a complex consisting of RANBP9, MKLN1 and GID8. Interacts with CTNNB1, AXIN1 and GSK3B. Post-translationally, polyubiquitinated through 'Lys-48'-polyubiquitin chains, leading to proteasomal degradation in the absence of Wnt stimulation.

It is found in the cytoplasm. The protein localises to the nucleus. Functionally, core component of the CTLH E3 ubiquitin-protein ligase complex that selectively accepts ubiquitin from UBE2H and mediates ubiquitination and subsequent proteasomal degradation of the transcription factor HBP1. Acts as a positive regulator of Wnt signaling pathway by promoting beta-catenin (CTNNB1) nuclear accumulation. The protein is Glucose-induced degradation protein 8 homolog (GID8) of Bos taurus (Bovine).